Here is a 164-residue protein sequence, read N- to C-terminus: E3 ubiquitin ligase complex SCF subunit sconC (164 aa).

The interval 106–164 (ILAANYLDIKALLDVGCKTVANMIKGKSPEEIRKTFNIQNDFTPEEEDQIRRENEWAEE) is interaction with the F-box domain of F-box proteins.

This sequence belongs to the SKP1 family. Component of the SCF (SKP1-CUL1-F-box protein) E3 ubiquitin ligase complexes.

Its pathway is protein modification; protein ubiquitination. Its function is as follows. Essential component of the SCF (SKP1-CUL1-F-box protein) E3 ubiquitin ligase complexes, which mediate the ubiquitination and subsequent proteasomal degradation of target proteins. Controls sulfur metabolite repression, probably by mediating the inactivation or degradation of the metR transcription factor. The sequence is that of E3 ubiquitin ligase complex SCF subunit sconC (sconC) from Arthroderma benhamiae (strain ATCC MYA-4681 / CBS 112371) (Trichophyton mentagrophytes).